The following is a 198-amino-acid chain: Recombination protein RecR (198 aa).

A C4-type zinc finger spans residues 57–72 (CAMCNTFTEHEVCETC). Residues 80-175 (ALLCVVETPG…KVSRLARGVP (96 aa)) form the Toprim domain.

This sequence belongs to the RecR family.

May play a role in DNA repair. It seems to be involved in an RecBC-independent recombinational process of DNA repair. It may act with RecF and RecO. This is Recombination protein RecR from Janthinobacterium sp. (strain Marseille) (Minibacterium massiliensis).